Reading from the N-terminus, the 984-residue chain is Lateral signaling target protein 2 homolog (984 aa).

4 disordered regions span residues 308 to 462 (PLGS…DTDE), 508 to 527 (YGTT…PSTS), 539 to 642 (RLRL…SSLS), and 749 to 900 (DNVF…SPPA). Composition is skewed to low complexity over residues 326 to 356 (TTSS…TTST), 369 to 380 (NNHNSNSNSSTN), 387 to 404 (TLRS…TPTA), and 412 to 433 (PSHS…PADW). Residues 434 to 462 (SDGDDEDEDDDDIEVDEEDLESSDDDTDE) are compositionally biased toward acidic residues. Residues S544 and S545 each carry the phosphoserine modification. Residues 571–611 (RESHSHRHHQRHHHHHHHRHSHQHQHRQPHPHRTTRSGRKR) show a composition bias toward basic residues. Residues 630-642 (LASGDTSAASSLS) show a composition bias toward low complexity. 2 stretches are compositionally biased toward polar residues: residues 760–779 (ATGQ…TIDL) and 789–806 (SGAT…SRSL). S805 bears the Phosphoserine mark. Composition is skewed to low complexity over residues 811–869 (AASS…PVSA) and 886–899 (PSSA…LSPP). Residues 904–964 (DGKAPRCMAC…VCRDCYVREV (61 aa)) form an FYVE-type zinc finger. Residues C910, C913, C926, C929, C934, C937, C956, and C959 each contribute to the Zn(2+) site.

This sequence belongs to the lst-2 family.

Its function is as follows. Negative regulator of epidermal growth factor receptor (EGFR) signaling. The protein is Lateral signaling target protein 2 homolog of Drosophila yakuba (Fruit fly).